The primary structure comprises 200 residues: Transcriptional repressor NrdR (200 aa).

A zinc finger lies at 3 to 34; sequence CPRCGKQEIRVLESRSAEGGQSVRRRRECMSC. The region spanning 49–139 is the ATP-cone domain; sequence IMVIKRDGSR…VYRKFQGIKD (91 aa). The tract at residues 158–200 is disordered; the sequence is LERPLRNSPPSESESTASPDWVGGIPQLLDQNDTSSNLSEIPK. The segment covering 186 to 200 has biased composition (polar residues); sequence LDQNDTSSNLSEIPK.

It belongs to the NrdR family. Requires Zn(2+) as cofactor.

Its function is as follows. Negatively regulates transcription of bacterial ribonucleotide reductase nrd genes and operons by binding to NrdR-boxes. This Synechococcus sp. (strain JA-3-3Ab) (Cyanobacteria bacterium Yellowstone A-Prime) protein is Transcriptional repressor NrdR.